The following is a 35-amino-acid chain: Beta/omega-theraphotoxin-Bp1a (35 aa).

3 disulfides stabilise this stretch: C2-C16, C9-C21, and C15-C28.

Belongs to the neurotoxin 10 (Hwtx-1) family. 54 (ProTx-1) subfamily. In terms of processing, an unnatural amidation at Ser-35 provokes a 14-fold increased toxin ability to inhibit Nav1.2/SCN2A and a ~2-fold decreased toxin ability to inhibit both Nav1.5/SCN5A and Nav1.7/SCN9A. Expressed by the venom gland.

It is found in the secreted. Functionally, ion channel impairing toxin that inhibits voltage-gated calcium channel Cav3.1/CACNA1G (IC(50)=53 nM), voltage-gated potassium channels Kv2.1/KCNB1 (IC(50)=411 nM), all sodium channels tested (Nav1.2/SCN2A (IC(50)=60-104 nM), Nav1.5/SCN5A (IC(50)=76-358 nM), Nav1.6/SCN8A (IC(50)=21-133 nM), Nav1.7/SCN9A (IC(50)=51-95 nM), and Nav1.8/SCN10A) as well as the nociceptor cation channel TRPA1 (IC(50)=389 nM). Acts as a potent and selective blocker of voltage-gated calcium channel Cav3.1/CACNA1G, but not of Cav3.2/CACNA1H, and Cav3.3/CACNA1I. On Nav1.7/SCN9A, primarily interacts with the DII and DIV voltage-sensor domains. Also acts as an inhibitor of nociceptor cation channel TRPA1 (IC(50)~389 nM) by binding to the S1-S4 gating domain of TRPA1. It shows moderate affinity for lipid bilayers. This chain is Beta/omega-theraphotoxin-Bp1a, found in Bumba pulcherrimaklaasi (Tarantula spider).